The chain runs to 240 residues: MORN repeat-containing protein 3 (240 aa).

Positions 6 to 35 are interaction with MDM2; that stretch reads CPKKSESLWKGWDRKAQRNGLRSQVYAVNG. MORN repeat units follow at residues 38-60, 62-84, 91-113, 114-136, 137-159, 160-182, and 184-205; these read YVGE…KKGA, YEGD…DQQT, YSGW…PKEY, YEGD…NGDI, YEGQ…NGNR, YEGC…DHGQ, and FEGF…GRDE. The interval 76-100 is interaction with SIRT1; it reads TLSLPDQQTGKCRRVYSGWWKGDKK. An interaction with TP53 region spans residues 206–240; the sequence is APEPTQFPIPEVKILDPDGVLAEALAMFRKTEEGD.

As to quaternary structure, interacts with MEIG1. Interacts with TP53, MDM2 and SIRT1; the interactions mediate post-transcriptional modifications of TP53 by MDM2 and SIRT1.

Its subcellular location is the cytoplasmic vesicle. It localises to the secretory vesicle. The protein localises to the acrosome. Assembles a suppression complex (suppresome) by tethering SIRT1 and MDM2 to regulate composite modifications of p53/TP53. Confers both deacetylation-mediated functional inactivation, by SIRT1, and ubiquitination-dependent degradation, by MDM2, of p53/TP53, promoting a proliferative and cell survival behaviors. May play a role in the regulation of spermatogenesis. The protein is MORN repeat-containing protein 3 of Homo sapiens (Human).